Reading from the N-terminus, the 529-residue chain is Serine/threonine-protein kinase RIO2 (529 aa).

Positions V97–F273 constitute a Protein kinase domain. Position 123 (K123) interacts with ATP. The active-site Proton acceptor is D228. Disordered regions lie at residues R331 to E366 and E411 to A452. The span at D337–D346 shows a compositional bias: acidic residues. A compositionally biased stretch (basic and acidic residues) spans E411–D428. Residues S429–A447 are compositionally biased toward acidic residues.

Belongs to the protein kinase superfamily. RIO-type Ser/Thr kinase family. It depends on Mg(2+) as a cofactor. As to expression, expressed in pharynx (metacorpus and posterior bulbus). Expression is restricted to adult stage.

The catalysed reaction is L-seryl-[protein] + ATP = O-phospho-L-seryl-[protein] + ADP + H(+). It catalyses the reaction L-threonyl-[protein] + ATP = O-phospho-L-threonyl-[protein] + ADP + H(+). Functionally, required for larval development. This Caenorhabditis elegans protein is Serine/threonine-protein kinase RIO2.